Here is a 348-residue protein sequence, read N- to C-terminus: Phosphoribosylformylglycinamidine cyclo-ligase (348 aa).

It belongs to the AIR synthase family.

It is found in the cytoplasm. The catalysed reaction is 2-formamido-N(1)-(5-O-phospho-beta-D-ribosyl)acetamidine + ATP = 5-amino-1-(5-phospho-beta-D-ribosyl)imidazole + ADP + phosphate + H(+). Its pathway is purine metabolism; IMP biosynthesis via de novo pathway; 5-amino-1-(5-phospho-D-ribosyl)imidazole from N(2)-formyl-N(1)-(5-phospho-D-ribosyl)glycinamide: step 2/2. This is Phosphoribosylformylglycinamidine cyclo-ligase from Geobacter metallireducens (strain ATCC 53774 / DSM 7210 / GS-15).